Here is a 394-residue protein sequence, read N- to C-terminus: NAD(P)H-quinone oxidoreductase subunit H (394 aa).

Belongs to the complex I 49 kDa subunit family. NDH-1 can be composed of about 15 different subunits; different subcomplexes with different compositions have been identified which probably have different functions.

It is found in the cellular thylakoid membrane. The catalysed reaction is a plastoquinone + NADH + (n+1) H(+)(in) = a plastoquinol + NAD(+) + n H(+)(out). It carries out the reaction a plastoquinone + NADPH + (n+1) H(+)(in) = a plastoquinol + NADP(+) + n H(+)(out). NDH-1 shuttles electrons from an unknown electron donor, via FMN and iron-sulfur (Fe-S) centers, to quinones in the respiratory and/or the photosynthetic chain. The immediate electron acceptor for the enzyme in this species is believed to be plastoquinone. Couples the redox reaction to proton translocation, and thus conserves the redox energy in a proton gradient. Cyanobacterial NDH-1 also plays a role in inorganic carbon-concentration. In Trichormus variabilis (strain ATCC 29413 / PCC 7937) (Anabaena variabilis), this protein is NAD(P)H-quinone oxidoreductase subunit H.